The sequence spans 329 residues: tRNA (cytidine(32)/guanosine(34)-2'-O)-methyltransferase (329 aa).

Residues Gly-53, Trp-55, Asp-75, Asp-91, and Asp-116 each coordinate S-adenosyl-L-methionine. Residue Lys-156 is the Proton acceptor of the active site. The segment at 221 to 240 (DFNQLDGPTRIIVPFVTCGD) is required for binding to WDR6. Ser-271 is modified (phosphoserine).

The protein belongs to the class I-like SAM-binding methyltransferase superfamily. RNA methyltransferase RlmE family. TRM7 subfamily. As to quaternary structure, interacts with WDR6; the interaction is direct, and required for 2'-O-methylation of position 34 in substrate tRNAs. Found in fetal brain, lung, liver and kidney. Widely expressed in adult tissue; with high expression in heart and liver, lower expression in skeletal muscle, kidney, and pancreas and also lowly expressed in brain and lung. In the adult brain, expressed in amygdala, caudate nucleus, corpus callosum, hippocampus and thalamus.

It localises to the cytoplasm. Its subcellular location is the nucleus. It carries out the reaction cytidine(32)/guanosine(34) in tRNA + 2 S-adenosyl-L-methionine = 2'-O-methylcytidine(32)/2'-O-methylguanosine(34) in tRNA + 2 S-adenosyl-L-homocysteine + 2 H(+). Inhibited by 2,6-diaminopurine (DAP); inhibition promotes UGA stop-codon readthrough during translation by misincorporation of tRNA(Trp) in the nascent polypeptide. Functionally, methylates the 2'-O-ribose of nucleotides at positions 32 and 34 of the tRNA anticodon loop of substrate tRNAs. Requisite for faithful cytoplasmic translation. Requires THADA for methylation of the nucleotide at position 32 of the anticodon loop of substrate tRNAs. Requires WDR6 for methylation of the nucleotide at position 34 of the anticodon loop of substrate tRNAs. Promotes translation efficiency of the UUU codon. Plays a role in neurogenesis. Required for expression of genes involved in neurogenesis, mitochondrial translation and energy generation, and lipid biosynthesis. Requisite for RNA-mediated gene silencing. May modify position 32 in tRNA(Arg(ACG)), tRNA(Arg(CCG)), tRNA(Arg(UCG)), tRNA(Cys(GCA)), tRNA(Cys(ACA)), tRNA(Gln(CUG)), tRNA(Gln(UUG)), tRNA(Gly(CCC)), tRNA(Leu(CAG))/tRNA(Leu(CAA)), tRNA(Leu(A/IAG)), tRNA(Leu(UAG)), tRNA(Phe(GAA)), tRNA(Pro(AGG))/tRNA(Pro(CGG))/tRNA(Pro(UGG)) and tRNA(Trp(CCA)), and position 34 in tRNA(Phe(GAA)), tRNA(Leu(CAA)), tRNA(Sec(UCA)), and tRNA(Trp(CCA)). The protein is tRNA (cytidine(32)/guanosine(34)-2'-O)-methyltransferase of Homo sapiens (Human).